Consider the following 284-residue polypeptide: Tryptophan 2,3-dioxygenase (284 aa).

Substrate contacts are provided by residues 53-57, tyrosine 115, and arginine 119; that span reads FIVQH. A heme-binding site is contributed by histidine 242. Threonine 256 contacts substrate.

It belongs to the tryptophan 2,3-dioxygenase family. As to quaternary structure, homotetramer. The cofactor is heme.

It carries out the reaction L-tryptophan + O2 = N-formyl-L-kynurenine. The protein operates within amino-acid degradation; L-tryptophan degradation via kynurenine pathway; L-kynurenine from L-tryptophan: step 1/2. In terms of biological role, heme-dependent dioxygenase that catalyzes the oxidative cleavage of the L-tryptophan (L-Trp) pyrrole ring and converts L-tryptophan to N-formyl-L-kynurenine. Catalyzes the oxidative cleavage of the indole moiety. This is Tryptophan 2,3-dioxygenase from Bordetella pertussis (strain Tohama I / ATCC BAA-589 / NCTC 13251).